Here is a 351-residue protein sequence, read N- to C-terminus: Ribonucleoside-diphosphate reductase subunit M2 B (351 aa).

Positions 1-31 (MGDPERPEAAGLDQDERSSSDTNENEIKSNE) are disordered. Fe cation contacts are provided by Asp-100, Glu-131, and His-134. Tyr-138 is a catalytic residue. Residues Glu-194, Glu-228, and His-231 each coordinate Fe cation.

The protein belongs to the ribonucleoside diphosphate reductase small chain family. In terms of assembly, heterotetramer with large (RRM1) subunit. Interacts with p53/TP53. Interacts with RRM1 in response to DNA damage. Fe cation is required as a cofactor.

It localises to the cytoplasm. The protein localises to the nucleus. It carries out the reaction a 2'-deoxyribonucleoside 5'-diphosphate + [thioredoxin]-disulfide + H2O = a ribonucleoside 5'-diphosphate + [thioredoxin]-dithiol. Its function is as follows. Plays a pivotal role in cell survival by repairing damaged DNA in a p53/TP53-dependent manner. Supplies deoxyribonucleotides for DNA repair in cells arrested at G1 or G2. Contains an iron-tyrosyl free radical center required for catalysis. Forms an active ribonucleotide reductase (RNR) complex with RRM1 which is expressed both in resting and proliferating cells in response to DNA damage. This chain is Ribonucleoside-diphosphate reductase subunit M2 B (RRM2B), found in Pongo abelii (Sumatran orangutan).